The following is a 236-amino-acid chain: 15,16-dihydrobiliverdin:ferredoxin oxidoreductase (236 aa).

This sequence belongs to the HY2 family.

The catalysed reaction is 15,16-dihydrobiliverdin + oxidized 2[4Fe-4S]-[ferredoxin] = biliverdin IXalpha + reduced 2[4Fe-4S]-[ferredoxin] + 2 H(+). In terms of biological role, catalyzes the two-electron reduction of biliverdin IX-alpha at the C15 methine bridge. In Prochlorococcus marinus (strain MIT 9515), this protein is 15,16-dihydrobiliverdin:ferredoxin oxidoreductase.